The following is a 987-amino-acid chain: Centrosomal protein of 120 kDa (987 aa).

One can recognise a C2 1 domain in the interval 1 to 112 (MVSKSDQLLI…QETKQAPKWY (112 aa)). Positions 352–408 (KTQNEHEPHHSKKRVLTPIKENTHTGPQSPSESPVPPHNQSPPTKDDATESEVESLL) are disordered. The C2 2 domain maps to 438-567 (SEAASGQKIA…LSSEKTRFLG (130 aa)). Residues 670 to 919 (ENQLKQKELA…RLRQQEQKQY (250 aa)) adopt a coiled-coil conformation. Residues 912–926 (RQQEQKQYPDSREIA) are compositionally biased toward basic and acidic residues. Residues 912-937 (RQQEQKQYPDSREIASGKMDGPHGSA) form a disordered region. Phosphoserine is present on Ser936.

This sequence belongs to the CEP120 family. In terms of assembly, interacts with TACC2 and TACC3. Interacts with CCDC52.

It is found in the cytoplasm. It localises to the cytoskeleton. The protein localises to the microtubule organizing center. The protein resides in the centrosome. Its function is as follows. Plays a role in the microtubule-dependent coupling of the nucleus and the centrosome. Involved in the processes that regulate centrosome-mediated interkinetic nuclear migration (INM) of neural progenitors and for proper positioning of neurons during brain development. Also implicated in the migration and selfrenewal of neural progenitors. May play a role in centriole duplication during mitosis. Required for the recruitment of CEP295 to the proximal end of new-born centrioles at the centriolar microtubule wall during early S phase in a PLK4-dependent manner. The chain is Centrosomal protein of 120 kDa (CEP120) from Bos taurus (Bovine).